A 436-amino-acid chain; its full sequence is MSIFTKIKKSLKSENLVNYNKFIKNLEFDEKNSTSTHLIIKAPNIFIANFVKRKYLNKISELYEKETGIKPKIDIVTKEISHRPLTIEEIIEPTTPSVLIPEYTFESFIVGPSNQFAYTAAKSVAENPGKNYNPLFIYGGVGLGKTHLLQAIGNYLKSSLNVLYVTSEQFMNEFTENIRMKTPERFHEKYRNCDVLLIDDVQFFAGKERTQEEFFHTFNELYNQKKQICLTADRPPKKLYDLVDRLRSRFEAGLIVDIQPPELETKIEIIRKKCELNGIYLPEEIIEYIATKLDSNIREIEGMITKINAMSKILGISEITLDFAKQALKEHIKDKKEVITLEDIIKLIAKEFNIKPSEIVSKSRNKNIVAARRCAIYLAREFTKESTPIIAKYFGLRDHSAVSHAIKSFNKKLKEDSEFRIKIEELKNKIQIKKSE.

A domain I, interacts with DnaA modulators region spans residues 1-69; that stretch reads MSIFTKIKKS…SELYEKETGI (69 aa). A domain II region spans residues 69–97; sequence IKPKIDIVTKEISHRPLTIEEIIEPTTPS. The tract at residues 98–311 is domain III, AAA+ region; that stretch reads VLIPEYTFES…GMITKINAMS (214 aa). Positions 142, 144, 145, and 146 each coordinate ATP. The tract at residues 312 to 436 is domain IV, binds dsDNA; that stretch reads KILGISEITL…KNKIQIKKSE (125 aa).

This sequence belongs to the DnaA family. In terms of assembly, oligomerizes as a right-handed, spiral filament on DNA at oriC.

The protein localises to the cytoplasm. Its function is as follows. Plays an essential role in the initiation and regulation of chromosomal replication. ATP-DnaA binds to the origin of replication (oriC) to initiate formation of the DNA replication initiation complex once per cell cycle. Binds the DnaA box (a 9 base pair repeat at the origin) and separates the double-stranded (ds)DNA. Forms a right-handed helical filament on oriC DNA; dsDNA binds to the exterior of the filament while single-stranded (ss)DNA is stabiized in the filament's interior. The ATP-DnaA-oriC complex binds and stabilizes one strand of the AT-rich DNA unwinding element (DUE), permitting loading of DNA polymerase. After initiation quickly degrades to an ADP-DnaA complex that is not apt for DNA replication. Binds acidic phospholipids. The polypeptide is Chromosomal replication initiator protein DnaA (Nautilia profundicola (strain ATCC BAA-1463 / DSM 18972 / AmH)).